A 314-amino-acid polypeptide reads, in one-letter code: Acetyl-coenzyme A carboxylase carboxyl transferase subunit beta, chloroplastic (314 aa).

Positions 47–314 (LWTRCDNCEN…APWKEKNNQV (268 aa)) constitute a CoA carboxyltransferase N-terminal domain. Residues Cys-51, Cys-54, Cys-70, and Cys-73 each coordinate Zn(2+). The segment at 51–73 (CDNCENMLYIKFLKQNKGVCEEC) adopts a C4-type zinc-finger fold.

Belongs to the AccD/PCCB family. In terms of assembly, acetyl-CoA carboxylase is a heterohexamer composed of biotin carboxyl carrier protein, biotin carboxylase and 2 subunits each of ACCase subunit alpha and ACCase plastid-coded subunit beta (accD). Zn(2+) is required as a cofactor.

The protein resides in the plastid. It is found in the chloroplast stroma. The enzyme catalyses N(6)-carboxybiotinyl-L-lysyl-[protein] + acetyl-CoA = N(6)-biotinyl-L-lysyl-[protein] + malonyl-CoA. It participates in lipid metabolism; malonyl-CoA biosynthesis; malonyl-CoA from acetyl-CoA: step 1/1. Functionally, component of the acetyl coenzyme A carboxylase (ACC) complex. Biotin carboxylase (BC) catalyzes the carboxylation of biotin on its carrier protein (BCCP) and then the CO(2) group is transferred by the transcarboxylase to acetyl-CoA to form malonyl-CoA. The protein is Acetyl-coenzyme A carboxylase carboxyl transferase subunit beta, chloroplastic of Angiopteris lygodiifolia (Turnip fern).